The primary structure comprises 143 residues: Spliceosomal protein DIB1 (143 aa).

An N-acetylalanine modification is found at alanine 2.

This sequence belongs to the DIM1 family. In terms of assembly, component of the U4/U6-U5 tri-snRNP complex composed of the U4, U6 and U5 snRNAs and at least PRP3, PRP4, PRP6, PRP8, PRP18, PRP31, PRP38, SNU13, SNU23, SNU66, SNU114, SPP381, SMB1, SMD1, SMD2, SMD3, SMX2, SMX3, LSM2, LSM3, LSM4, LSM5, LSM6, LSM7, LSM8, BRR2 and DIB1.

It localises to the nucleus. Functionally, essential role in pre-mRNA splicing. Also essential for entry into mitosis (G2/M progression) as well as for chromosome segregation during mitosis. This is Spliceosomal protein DIB1 (DIB1) from Saccharomyces cerevisiae (strain ATCC 204508 / S288c) (Baker's yeast).